The sequence spans 110 residues: Chloride intracellular channel protein 1 (110 aa).

Ala2 is subject to N-acetylalanine. Residues 2–90 form a required for insertion into the membrane region; that stretch reads AEEQPQVELF…EEFLEAVLCP (89 aa). The residue at position 13 (Lys13) is an N6-acetyllysine. A G-site motif is present at residues 24 to 27; sequence CPFS. Cys24 and Cys59 are disulfide-bonded. A helical membrane pass occupies residues 26–46; it reads FSQRLFMVLWLKGVTFNVTTV.

It belongs to the chloride channel CLIC family. Monomer. Homodimer (in vitro). Interacts with TRAPPC2. Dimerization requires a conformation change that leads to the exposure of a large hydrophobic surface. In vivo, this may lead to membrane insertion.

It localises to the nucleus. Its subcellular location is the nucleus membrane. The protein resides in the cytoplasm. The protein localises to the cell membrane. It is found in the endoplasmic reticulum. It carries out the reaction L-dehydroascorbate + 2 glutathione = glutathione disulfide + L-ascorbate. The enzyme catalyses chloride(in) = chloride(out). It catalyses the reaction iodide(out) = iodide(in). The catalysed reaction is thiocyanate(in) = thiocyanate(out). It carries out the reaction nitrate(in) = nitrate(out). The enzyme catalyses bromide(in) = bromide(out). It catalyses the reaction fluoride(in) = fluoride(out). Its function is as follows. In the soluble state, catalyzes glutaredoxin-like thiol disulfide exchange reactions with reduced glutathione as electron donor. Reduces selenite and dehydroascorbate and may act as an antioxidant during oxidative stress response. Can insert into membranes and form voltage-dependent multi-ion conductive channels. Membrane insertion seems to be redox-regulated and may occur only under oxidizing conditions. Involved in regulation of the cell cycle. The protein is Chloride intracellular channel protein 1 (CLIC1) of Sus scrofa (Pig).